The sequence spans 992 residues: ATP-dependent 6-phosphofructokinase subunit alpha (992 aa).

The tract at residues 1–558 (MNNSVYGVAF…LYSNFMSTTV (558 aa)) is N-terminal catalytic PFK domain 1. ATP is bound by residues Gly-193, 256 to 257 (RS), and 286 to 289 (GDGS). Residue Asp-287 participates in Mg(2+) binding. Residues 332-334 (SID), Arg-369, 376-378 (MGR), Glu-433, Lys-460, and 466-469 (HVQR) each bind beta-D-fructose 6-phosphate. Asp-334 functions as the Proton acceptor in the catalytic mechanism. The segment at 559-572 (NDDGSQLLPEADRL) is interdomain linker. The interval 573–992 (NIAIVHVGAP…AAKEDSALYV (420 aa)) is C-terminal regulatory PFK domain 2. Beta-D-fructose 2,6-bisphosphate is bound by residues Arg-643, 700 to 704 (TVSNN), Arg-738, 745 to 747 (QGG), Glu-805, Arg-831, 837 to 840 (HVQQ), and Arg-929.

This sequence belongs to the phosphofructokinase type A (PFKA) family. ATP-dependent PFK group I subfamily. Eukaryotic two domain clade 'E' sub-subfamily. Heterooctamer of 4 alpha and 4 beta chains. The cofactor is Mg(2+).

The protein resides in the cytoplasm. The catalysed reaction is beta-D-fructose 6-phosphate + ATP = beta-D-fructose 1,6-bisphosphate + ADP + H(+). It participates in carbohydrate degradation; glycolysis; D-glyceraldehyde 3-phosphate and glycerone phosphate from D-glucose: step 3/4. Its activity is regulated as follows. Allosterically activated by ADP, AMP, or fructose 2,6-bisphosphate, and allosterically inhibited by ATP or citrate. Functionally, catalyzes the phosphorylation of D-fructose 6-phosphate to fructose 1,6-bisphosphate by ATP, the first committing step of glycolysis. The protein is ATP-dependent 6-phosphofructokinase subunit alpha (PFK1) of Kluyveromyces lactis (strain ATCC 8585 / CBS 2359 / DSM 70799 / NBRC 1267 / NRRL Y-1140 / WM37) (Yeast).